Consider the following 216-residue polypeptide: FMN-dependent NADH:quinone oxidoreductase 2 (216 aa).

FMN contacts are provided by residues serine 9, serine 15–serine 17, methionine 96–phenylalanine 99, and serine 140–glycine 143.

Belongs to the azoreductase type 1 family. As to quaternary structure, homodimer. It depends on FMN as a cofactor.

The catalysed reaction is 2 a quinone + NADH + H(+) = 2 a 1,4-benzosemiquinone + NAD(+). It catalyses the reaction N,N-dimethyl-1,4-phenylenediamine + anthranilate + 2 NAD(+) = 2-(4-dimethylaminophenyl)diazenylbenzoate + 2 NADH + 2 H(+). In terms of biological role, quinone reductase that provides resistance to thiol-specific stress caused by electrophilic quinones. Its function is as follows. Also exhibits azoreductase activity. Catalyzes the reductive cleavage of the azo bond in aromatic azo compounds to the corresponding amines. The sequence is that of FMN-dependent NADH:quinone oxidoreductase 2 from Xanthomonas euvesicatoria pv. vesicatoria (strain 85-10) (Xanthomonas campestris pv. vesicatoria).